The chain runs to 197 residues: ATP-dependent Clp protease proteolytic subunit 1 (197 aa).

Serine 99 (nucleophile) is an active-site residue. Residue histidine 124 is part of the active site.

This sequence belongs to the peptidase S14 family. In terms of assembly, fourteen ClpP subunits assemble into 2 heptameric rings which stack back to back to give a disk-like structure with a central cavity, resembling the structure of eukaryotic proteasomes.

Its subcellular location is the cytoplasm. It catalyses the reaction Hydrolysis of proteins to small peptides in the presence of ATP and magnesium. alpha-casein is the usual test substrate. In the absence of ATP, only oligopeptides shorter than five residues are hydrolyzed (such as succinyl-Leu-Tyr-|-NHMec, and Leu-Tyr-Leu-|-Tyr-Trp, in which cleavage of the -Tyr-|-Leu- and -Tyr-|-Trp bonds also occurs).. Cleaves peptides in various proteins in a process that requires ATP hydrolysis. Has a chymotrypsin-like activity. Plays a major role in the degradation of misfolded proteins. In Treponema denticola (strain ATCC 35405 / DSM 14222 / CIP 103919 / JCM 8153 / KCTC 15104), this protein is ATP-dependent Clp protease proteolytic subunit 1.